The following is a 258-amino-acid chain: 6-phosphogluconolactonase (258 aa).

A2 is subject to N-acetylalanine. A Phosphoserine modification is found at S49. Residue K180 is modified to N6-acetyllysine.

The protein belongs to the glucosamine/galactosamine-6-phosphate isomerase family. 6-phosphogluconolactonase subfamily.

It is found in the cytoplasm. It catalyses the reaction 6-phospho-D-glucono-1,5-lactone + H2O = 6-phospho-D-gluconate + H(+). Its pathway is carbohydrate degradation; pentose phosphate pathway; D-ribulose 5-phosphate from D-glucose 6-phosphate (oxidative stage): step 2/3. Its function is as follows. Hydrolysis of 6-phosphogluconolactone to 6-phosphogluconate. In Homo sapiens (Human), this protein is 6-phosphogluconolactonase.